A 166-amino-acid chain; its full sequence is MSCDEGKLFVGGLNFETTEESLEQVFSKYGQVAEVVVVKDRESKRSRGFGFVTFENPEDAKDAMMAMNGKSVDGRQIRVDQAGKSSNDRRGGYRGGSSGGRGFFRGGRGRGGGGDRGYGGSSRFENRSGGYQSSGSRDYYGRSHGSYGDRSGGSYRDSYDSYTTQE.

The RRM domain occupies 6 to 84 (GKLFVGGLNF…RQIRVDQAGK (79 aa)). Residues 68–166 (NGKSVDGRQI…DSYDSYTTQE (99 aa)) form a disordered region. The segment covering 93-120 (YRGGSSGGRGFFRGGRGRGGGGDRGYGG) has biased composition (gly residues). Positions 121–166 (SSRFENRSGGYQSSGSRDYYGRSHGSYGDRSGGSYRDSYDSYTTQE) are enriched in low complexity.

As to quaternary structure, interacts with prmt1. Interacts with elavl1/elrA (via RRM3). Associates with ribosomes. Methylated on arginine residues within RGG motifs. Methylation by prmt1 promotes cytoplasmic accumulation.

It is found in the nucleus. The protein localises to the nucleoplasm. The protein resides in the cytoplasm. In terms of biological role, cold-inducible mRNA binding protein. Acts cooperatively with elavl1/elrA to stabilize AU-rich element (ARE)-containing mRNAs by binding to themm and inhibiting their deadenylation. Essential for embryonic gastrulation and neural development, acting to maintain the expression of a set of adhesion molecules, and cell movement during embryogenesis. Required for pronephros development. This is Cold-inducible RNA-binding protein from Xenopus tropicalis (Western clawed frog).